The following is a 197-amino-acid chain: DNA helicase/primase complex protein (197 aa).

The protein belongs to the herpesviridae UL52 family.

Functionally, involved in DNA replication. The protein is DNA helicase/primase complex protein (7) of Equus caballus (Horse).